A 598-amino-acid chain; its full sequence is Beta-fructofuranosidase, insoluble isoenzyme 2 (598 aa).

An N-terminal signal peptide occupies residues 1–25 (MGVLGSRVAWAWLVQLLLLQQLAGA). Residue Asp69 is part of the active site. N-linked (GlcNAc...) asparagine glycans are attached at residues Asn164, Asn189, and Asn348.

It belongs to the glycosyl hydrolase 32 family. In terms of tissue distribution, expressed in leaves and flowers. Weakly expressed in seeds. Expressed in growing roots, node and the rapidly elongating zone of the internode.

The protein localises to the secreted. It is found in the cell wall. It carries out the reaction Hydrolysis of terminal non-reducing beta-D-fructofuranoside residues in beta-D-fructofuranosides.. Its function is as follows. Cell wall-associated invertase that cleaves sucrose into glucose and fructose and is required for assimilated carbon partitioning during early grain-filling. May be involved in sucrose unloaded in the ovular and stylar vascular tissues for the stimulation of starch synthesis in the developing endosperm during grain-filling. Sugar homeostasis mediated by CIN2/GIF1 plays an important role in constitutive and induced physical and chemical defense against pathogens. The chain is Beta-fructofuranosidase, insoluble isoenzyme 2 (CIN2) from Oryza sativa subsp. japonica (Rice).